A 152-amino-acid chain; its full sequence is Ribosome maturation factor RimP (152 aa).

This sequence belongs to the RimP family.

The protein resides in the cytoplasm. In terms of biological role, required for maturation of 30S ribosomal subunits. This chain is Ribosome maturation factor RimP, found in Burkholderia vietnamiensis (strain G4 / LMG 22486) (Burkholderia cepacia (strain R1808)).